We begin with the raw amino-acid sequence, 139 residues long: Putative nickel-responsive regulator (139 aa).

4 residues coordinate Ni(2+): histidine 79, histidine 90, histidine 92, and cysteine 98.

This sequence belongs to the transcriptional regulatory CopG/NikR family. Ni(2+) serves as cofactor.

In terms of biological role, transcriptional regulator. This is Putative nickel-responsive regulator from Trichlorobacter lovleyi (strain ATCC BAA-1151 / DSM 17278 / SZ) (Geobacter lovleyi).